The following is a 119-amino-acid chain: MKKKYRIKKNDDFQKVFRRGKSFANRQFVVYTLKQEGSNHFRIGLSVSKKIGNAVCRNRIKRYIRQSFHELESQINPENEYIIIARKPAANMDFHEVKKSLIHVLKVGRVLKQKPNNSK.

It belongs to the RnpA family. As to quaternary structure, consists of a catalytic RNA component (M1 or rnpB) and a protein subunit.

The catalysed reaction is Endonucleolytic cleavage of RNA, removing 5'-extranucleotides from tRNA precursor.. In terms of biological role, RNaseP catalyzes the removal of the 5'-leader sequence from pre-tRNA to produce the mature 5'-terminus. It can also cleave other RNA substrates such as 4.5S RNA. The protein component plays an auxiliary but essential role in vivo by binding to the 5'-leader sequence and broadening the substrate specificity of the ribozyme. This Listeria monocytogenes serotype 4b (strain CLIP80459) protein is Ribonuclease P protein component.